The primary structure comprises 226 residues: 2-C-methyl-D-erythritol 4-phosphate cytidylyltransferase (226 aa).

This sequence belongs to the IspD/TarI cytidylyltransferase family. IspD subfamily.

It carries out the reaction 2-C-methyl-D-erythritol 4-phosphate + CTP + H(+) = 4-CDP-2-C-methyl-D-erythritol + diphosphate. The protein operates within isoprenoid biosynthesis; isopentenyl diphosphate biosynthesis via DXP pathway; isopentenyl diphosphate from 1-deoxy-D-xylulose 5-phosphate: step 2/6. In terms of biological role, catalyzes the formation of 4-diphosphocytidyl-2-C-methyl-D-erythritol from CTP and 2-C-methyl-D-erythritol 4-phosphate (MEP). This is 2-C-methyl-D-erythritol 4-phosphate cytidylyltransferase from Synechococcus sp. (strain CC9902).